We begin with the raw amino-acid sequence, 525 residues long: GMP synthase [glutamine-hydrolyzing] (525 aa).

The Glutamine amidotransferase type-1 domain maps to 8-207 (KILILDFGSQ…ALDICQCEAN (200 aa)). Residue C85 is the Nucleophile of the active site. Active-site residues include H181 and E183. The region spanning 208–400 (WKPSSIIEDA…LGLPYNMLYR (193 aa)) is the GMPS ATP-PPase domain. 235–241 (SGGVDSS) is an ATP binding site.

As to quaternary structure, homodimer.

The enzyme catalyses XMP + L-glutamine + ATP + H2O = GMP + L-glutamate + AMP + diphosphate + 2 H(+). It participates in purine metabolism; GMP biosynthesis; GMP from XMP (L-Gln route): step 1/1. In terms of biological role, catalyzes the synthesis of GMP from XMP. This is GMP synthase [glutamine-hydrolyzing] from Shewanella loihica (strain ATCC BAA-1088 / PV-4).